Here is a 507-residue protein sequence, read N- to C-terminus: Alkyl hydroperoxide reductase subunit F (507 aa).

Position 207-222 (207-222 (DVLIVGGGPASGSAAI)) interacts with FAD. Cysteine 335 and cysteine 338 form a disulfide bridge. 347–361 (DVAVIGGGNSGVEAA) contacts NAD(+). 467–477 (TNVPGIFAAGD) contacts FAD.

Belongs to the class-II pyridine nucleotide-disulfide oxidoreductase family. Homodimer. FAD serves as cofactor.

Its function is as follows. Serves to protect the cell against DNA damage by alkyl hydroperoxides. It can use either NADH or NADPH as electron donor for direct reduction of redox dyes or of alkyl hydroperoxides when combined with the AhpC protein. This is Alkyl hydroperoxide reductase subunit F (ahpF) from Staphylococcus aureus (strain Mu50 / ATCC 700699).